The following is a 325-amino-acid chain: Mitochondrial amidoxime-reducing component 1 (325 aa).

Over 1-16 the chain is Mitochondrial matrix; the sequence is MDLKEAFATIFDQNRK. Residues 17–36 form a helical; Signal-anchor for type II membrane protein membrane-spanning segment; that stretch reads VALYAAGTTVAVLGLGLVFK. The Cytoplasmic segment spans residues 37–325; that stretch reads YMRREEKLTR…VGEPVYKITY (289 aa). 3 residues coordinate Mo-molybdopterin: lysine 59, serine 60, and arginine 84. The segment at 85–175 is MOSC N-terminal region; it reads HWLVITEDGH…ADKPVRLVHY (91 aa). One can recognise an MOSC domain in the interval 179-323; that stretch reads LKPQRPHEKE…LHVGEPVYKI (145 aa). Residues arginine 230, arginine 264, cysteine 265, and tyrosine 305 each contribute to the Mo-molybdopterin site.

Mo-molybdopterin serves as cofactor.

The protein resides in the mitochondrion outer membrane. It localises to the membrane. The catalysed reaction is N(omega)-hydroxy-L-arginine + 2 Fe(II)-[cytochrome b5] + 2 H(+) = L-arginine + 2 Fe(III)-[cytochrome b5] + H2O. Its function is as follows. Catalyzes the reduction of N-oxygenated molecules, acting as a counterpart of cytochrome P450 and flavin-containing monooxygenases in metabolic cycles. As a component of prodrug-converting system, reduces a multitude of N-hydroxylated prodrugs particularly amidoximes, leading to increased drug bioavailability. May be involved in mitochondrial N(omega)-hydroxy-L-arginine (NOHA) reduction, regulating endogenous nitric oxide levels and biosynthesis. Postulated to cleave the N-OH bond of N-hydroxylated substrates in concert with electron transfer from NADH to cytochrome b5 reductase then to cytochrome b5, the ultimate electron donor that primes the active site for substrate reduction. This is Mitochondrial amidoxime-reducing component 1 (mtarc1) from Danio rerio (Zebrafish).